Reading from the N-terminus, the 466-residue chain is Soluble pyridine nucleotide transhydrogenase (466 aa).

36 to 45 (ERYQNVGGGC) lines the FAD pocket.

The protein belongs to the class-I pyridine nucleotide-disulfide oxidoreductase family. FAD is required as a cofactor.

Its subcellular location is the cytoplasm. The enzyme catalyses NAD(+) + NADPH = NADH + NADP(+). Functionally, conversion of NADPH, generated by peripheral catabolic pathways, to NADH, which can enter the respiratory chain for energy generation. The polypeptide is Soluble pyridine nucleotide transhydrogenase (Escherichia fergusonii (strain ATCC 35469 / DSM 13698 / CCUG 18766 / IAM 14443 / JCM 21226 / LMG 7866 / NBRC 102419 / NCTC 12128 / CDC 0568-73)).